Here is a 396-residue protein sequence, read N- to C-terminus: Elongation factor Tu (396 aa).

The tr-type G domain maps to 10-206 (KPHVNVGTIG…ALDSYIPTPE (197 aa)). A G1 region spans residues 19 to 26 (GHVDHGKT). GTP is bound at residue 19–26 (GHVDHGKT). A Mg(2+)-binding site is contributed by T26. The segment at 60 to 64 (GITIN) is G2. Residues 81–84 (DCPG) form a G3 region. GTP contacts are provided by residues 81-85 (DCPGH) and 136-139 (NKCD). A G4 region spans residues 136-139 (NKCD). The G5 stretch occupies residues 174–176 (SAL).

The protein belongs to the TRAFAC class translation factor GTPase superfamily. Classic translation factor GTPase family. EF-Tu/EF-1A subfamily. As to quaternary structure, monomer.

It localises to the cytoplasm. It catalyses the reaction GTP + H2O = GDP + phosphate + H(+). In terms of biological role, GTP hydrolase that promotes the GTP-dependent binding of aminoacyl-tRNA to the A-site of ribosomes during protein biosynthesis. This chain is Elongation factor Tu, found in Aromatoleum aromaticum (strain DSM 19018 / LMG 30748 / EbN1) (Azoarcus sp. (strain EbN1)).